A 136-amino-acid polypeptide reads, in one-letter code: Polyadenylate-binding protein-interacting protein 2B (136 aa).

Polar residues predominate over residues 15 to 25 (NGSSVASTSPS). Disordered stretches follow at residues 15 to 40 (NGSSVASTSPSVKCKEDQGLNGHEEK) and 107 to 136 (SVGDSHESEDILSKSNLNPDAKEFVPGVKY). Positions 27 to 40 (KCKEDQGLNGHEEK) are enriched in basic and acidic residues.

The protein belongs to the PAIP2 family. As to quaternary structure, interacts (via central acidic portion and C-terminus) with PABPC1 (via the second and third RRM domains and the C-terminus). Post-translationally, ubiquitinated in vitro. As to expression, expressed at very high levels in pancreas, at high levels in testis and at moderately high levels in brain, heart and lung (at protein level).

Inhibits translation of capped and polyadenylated mRNAs by displacing PABPC1 from the poly(A) tail. This chain is Polyadenylate-binding protein-interacting protein 2B (Paip2b), found in Mus musculus (Mouse).